The chain runs to 297 residues: MLSVLSYGRLVARAVIGGLSQTDSRDYSLVSASFGFGKDFRKGILKKGMCYGDDACFIARHRSADVLGVADGVGGWRDYGVDPSQFSGTLMRTCERLVKEGRFVPSNPVGILTTSYYELLQNKVPLLGSSTACIVVLDRQSHRLHTANLGDSGFLVVRGGEVVHRSDEQQHYFNTPFQLSIAPPEAEGSVLSDSPDAADSSSFDVQLGDIILTATDGLFDNMPDYMILQELKKLKNTNYESTQQTAKSIAEQAHVLAYDPNYMSPFAQFACDNGLNVRGGKPDDITVLLSIVAEYTD.

The transit peptide at 1–27 (MLSVLSYGRLVARAVIGGLSQTDSRDY) directs the protein to the mitochondrion. The PPM-type phosphatase domain maps to 28-292 (SLVSASFGFG…DDITVLLSIV (265 aa)). D71, G72, and D216 together coordinate Mn(2+).

It belongs to the PP2C family. It depends on Mg(2+) as a cofactor. Requires Mn(2+) as cofactor.

It is found in the mitochondrion matrix. It carries out the reaction O-phospho-L-seryl-[protein] + H2O = L-seryl-[protein] + phosphate. It catalyses the reaction O-phospho-L-threonyl-[protein] + H2O = L-threonyl-[protein] + phosphate. Protein phosphatase which positively regulates biosynthesis of the ubiquinone, coenzyme Q. Dephosphorylates the ubiquinone biosynthesis protein coq7 which is likely to lead to its activation. This is Protein phosphatase PTC7 homolog (pptc7) from Danio rerio (Zebrafish).